The primary structure comprises 603 residues: Sulfoacetaldehyde acetyltransferase (603 aa).

This sequence belongs to the TPP enzyme family. In terms of assembly, homodimer or homotetramer. It depends on Mg(2+) as a cofactor. Thiamine diphosphate serves as cofactor.

The protein resides in the cytoplasm. The catalysed reaction is acetyl phosphate + sulfite + H(+) = sulfoacetaldehyde + phosphate. It functions in the pathway organosulfur degradation; taurine degradation via aerobic pathway; acetyl phosphate and sulfite from taurine: step 2/2. The polypeptide is Sulfoacetaldehyde acetyltransferase (xsc) (Alcaligenes xylosoxydans xylosoxydans (Achromobacter xylosoxidans)).